Here is a 309-residue protein sequence, read N- to C-terminus: Tagatose-6-phosphate kinase 1 (309 aa).

Belongs to the carbohydrate kinase PfkB family. LacC subfamily.

It catalyses the reaction D-tagatofuranose 6-phosphate + ATP = D-tagatofuranose 1,6-bisphosphate + ADP + H(+). It functions in the pathway carbohydrate metabolism; D-tagatose 6-phosphate degradation; D-glyceraldehyde 3-phosphate and glycerone phosphate from D-tagatose 6-phosphate: step 1/2. In Streptococcus agalactiae serotype III (strain NEM316), this protein is Tagatose-6-phosphate kinase 1.